The primary structure comprises 312 residues: HPr kinase/phosphorylase (312 aa).

Catalysis depends on residues His-139 and Lys-160. Residue 154–161 coordinates ATP; the sequence is GSSGVGKS. Ser-161 contacts Mg(2+). The active-site Proton acceptor; for phosphorylation activity. Proton donor; for dephosphorylation activity is Asp-178. An important for the catalytic mechanism of both phosphorylation and dephosphorylation region spans residues 202–211; the sequence is LEIRGLGIIN. Glu-203 contacts Mg(2+). Arg-244 is a catalytic residue. Residues 265–270 are important for the catalytic mechanism of dephosphorylation; that stretch reads PVRPGR.

Belongs to the HPrK/P family. In terms of assembly, homohexamer. It depends on Mg(2+) as a cofactor.

The catalysed reaction is [HPr protein]-L-serine + ATP = [HPr protein]-O-phospho-L-serine + ADP + H(+). It catalyses the reaction [HPr protein]-O-phospho-L-serine + phosphate + H(+) = [HPr protein]-L-serine + diphosphate. In terms of biological role, catalyzes the ATP- as well as the pyrophosphate-dependent phosphorylation of a specific serine residue in HPr, a phosphocarrier protein of the phosphoenolpyruvate-dependent sugar phosphotransferase system (PTS). HprK/P also catalyzes the pyrophosphate-producing, inorganic phosphate-dependent dephosphorylation (phosphorolysis) of seryl-phosphorylated HPr (P-Ser-HPr). The two antagonistic activities of HprK/P are regulated by several intracellular metabolites, which change their concentration in response to the absence or presence of rapidly metabolisable carbon sources (glucose, fructose, etc.) in the growth medium. Therefore, by controlling the phosphorylation state of HPr, HPrK/P is a sensor enzyme that plays a major role in the regulation of carbon metabolism and sugar transport: it mediates carbon catabolite repression (CCR), and regulates PTS-catalyzed carbohydrate uptake and inducer exclusion. The sequence is that of HPr kinase/phosphorylase from Listeria monocytogenes serotype 4b (strain CLIP80459).